Reading from the N-terminus, the 256-residue chain is Imidazole glycerol phosphate synthase subunit HisF (256 aa).

Active-site residues include Asp-11 and Asp-130.

This sequence belongs to the HisA/HisF family. As to quaternary structure, heterodimer of HisH and HisF.

It localises to the cytoplasm. It catalyses the reaction 5-[(5-phospho-1-deoxy-D-ribulos-1-ylimino)methylamino]-1-(5-phospho-beta-D-ribosyl)imidazole-4-carboxamide + L-glutamine = D-erythro-1-(imidazol-4-yl)glycerol 3-phosphate + 5-amino-1-(5-phospho-beta-D-ribosyl)imidazole-4-carboxamide + L-glutamate + H(+). Its pathway is amino-acid biosynthesis; L-histidine biosynthesis; L-histidine from 5-phospho-alpha-D-ribose 1-diphosphate: step 5/9. IGPS catalyzes the conversion of PRFAR and glutamine to IGP, AICAR and glutamate. The HisF subunit catalyzes the cyclization activity that produces IGP and AICAR from PRFAR using the ammonia provided by the HisH subunit. This chain is Imidazole glycerol phosphate synthase subunit HisF, found in Prochlorococcus marinus (strain MIT 9215).